We begin with the raw amino-acid sequence, 191 residues long: Transcriptional regulator MET32 (191 aa).

Residues 70–96 are disordered; the sequence is KKENALPKPPKSSKSKPQDRRNSTGEK. The span at 85-96 shows a compositional bias: basic and acidic residues; that stretch reads KPQDRRNSTGEK. The C2H2-type 1 zinc finger occupies 98-120; the sequence is FKCAKCSLEFSRSSDLRRHEKTH. The C2H2-type 2; atypical zinc finger occupies 126-150; it reads NICPQCGKGFARKDALKRHYDTLTC.

As to quaternary structure, interacts with MET4 and MET28.

The protein resides in the cytoplasm. Its subcellular location is the nucleus. Its function is as follows. Auxiliary transcriptional regulator of sulfur amino acid metabolism. Involved in the transcriptional activation of MET28. The sequence is that of Transcriptional regulator MET32 (MET32) from Saccharomyces cerevisiae (strain ATCC 204508 / S288c) (Baker's yeast).